A 131-amino-acid chain; its full sequence is Small ribosomal subunit protein uS8 (131 aa).

This sequence belongs to the universal ribosomal protein uS8 family. As to quaternary structure, part of the 30S ribosomal subunit. Contacts proteins S5 and S12.

One of the primary rRNA binding proteins, it binds directly to 16S rRNA central domain where it helps coordinate assembly of the platform of the 30S subunit. The chain is Small ribosomal subunit protein uS8 from Chlorobium phaeobacteroides (strain DSM 266 / SMG 266 / 2430).